Consider the following 400-residue polypeptide: CinA-like protein (400 aa).

The protein belongs to the CinA family.

This Escherichia coli O9:H4 (strain HS) protein is CinA-like protein.